The sequence spans 493 residues: Tripartite motif-containing protein 5 (493 aa).

The residue at position 2 (A2) is an N-acetylalanine. The RING-type zinc finger occupies 15 to 58 (CPICLELLTQPLSLDCGHSFCQACLTANHKTSMPDGERSCPVCR). Position 85 is a phosphoserine (S85). The B box-type zinc-finger motif lies at 90-131 (QKVDHCARHGEKLLLFCREDRKVICWLCERSQEHRGHHTFLM). Zn(2+) is bound by residues C95, H98, C117, and H123. A coiled-coil region spans residues 130–240 (LMEEVAQEYQ…LISDLEHRLQ (111 aa)). The segment at 185-198 (FEQLRHILDWVESN) is required for interaction with GABARAP and for autophagy. Residues 281-493 (LQVTLEVLRE…VPMTLCSPSS (213 aa)) enclose the B30.2/SPRY domain.

The protein belongs to the TRIM/RBCC family. In terms of assembly, can form homodimers and homotrimers. In addition to lower-order dimerization, also exhibits a higher-order multimerization and both low- and high-order multimerizations are essential for its restriction activity. Interacts with BTBD1 and BTBD2. Interacts with PSMC4, PSMC5, PSMD7 and HSPA8/HSC70. Interacts (via B30.2/SPRY domain) with HSPA1A/B. Interacts with PSMC2, MAP3K7/TAK1, TAB2 and TAB3. Interacts with SQSTM1. Interacts with TRIM6 and TRIM34. Interacts with ULK1 (phosphorylated form), GABARAP, GABARAPL1, GABARAPL2, MAP1LC3A, MAP1LC3C and BECN1. Post-translationally, degraded in a proteasome-independent fashion in the absence of viral infection but in a proteasome-dependent fashion following exposure to restriction sensitive virus. Autoubiquitinated in a RING finger- and UBE2D2-dependent manner. Monoubiquitinated by TRIM21. Deubiquitinated by Yersinia YopJ. Ubiquitination may not lead to proteasomal degradation.

The protein resides in the cytoplasm. The protein localises to the nucleus. It carries out the reaction S-ubiquitinyl-[E2 ubiquitin-conjugating enzyme]-L-cysteine + [acceptor protein]-L-lysine = [E2 ubiquitin-conjugating enzyme]-L-cysteine + N(6)-ubiquitinyl-[acceptor protein]-L-lysine.. The protein operates within protein modification; protein ubiquitination. In terms of biological role, capsid-specific restriction factor that prevents infection from non-host-adapted retroviruses. Blocks viral replication early in the life cycle, after viral entry but before reverse transcription. In addition to acting as a capsid-specific restriction factor, also acts as a pattern recognition receptor that activates innate immune signaling in response to the retroviral capsid lattice. Binding to the viral capsid triggers its E3 ubiquitin ligase activity, and in concert with the heterodimeric ubiquitin conjugating enzyme complex UBE2V1-UBE2N (also known as UBC13-UEV1A complex) generates 'Lys-63'-linked polyubiquitin chains, which in turn are catalysts in the autophosphorylation of the MAP3K7/TAK1 complex (includes TAK1, TAB2, and TAB3). Activation of the MAP3K7/TAK1 complex by autophosphorylation results in the induction and expression of NF-kappa-B and MAPK-responsive inflammatory genes, thereby leading to an innate immune response in the infected cell. Plays a role in regulating autophagy through activation of autophagy regulator BECN1 by causing its dissociation from its inhibitors BCL2 and TAB2. This chain is Tripartite motif-containing protein 5 (TRIM5), found in Hylobates lar (Lar gibbon).